We begin with the raw amino-acid sequence, 106 residues long: Defensin-like protein 1 (106 aa).

Positions 1 to 25 (MARSLCFMAFAVLAMMLFVAYEVQA) are cleaved as a signal peptide. 4 disulfides stabilise this stretch: C29/C73, C40/C60, C46/C67, and C50/C69.

Belongs to the DEFL family.

The protein localises to the secreted. It localises to the vacuole. This is Defensin-like protein 1 (THIO1) from Nicotiana paniculata.